A 921-amino-acid chain; its full sequence is Isoleucine--tRNA ligase (921 aa).

Positions 57-67 (PYANGELHMGH) match the 'HIGH' region motif. An L-isoleucyl-5'-AMP-binding site is contributed by Glu552. Positions 593–597 (KMSKS) match the 'KMSKS' region motif. Lys596 serves as a coordination point for ATP. Residues Cys888, Cys891, Cys908, and Cys911 each contribute to the Zn(2+) site.

It belongs to the class-I aminoacyl-tRNA synthetase family. IleS type 1 subfamily. Monomer. The cofactor is Zn(2+).

The protein localises to the cytoplasm. The enzyme catalyses tRNA(Ile) + L-isoleucine + ATP = L-isoleucyl-tRNA(Ile) + AMP + diphosphate. In terms of biological role, catalyzes the attachment of isoleucine to tRNA(Ile). As IleRS can inadvertently accommodate and process structurally similar amino acids such as valine, to avoid such errors it has two additional distinct tRNA(Ile)-dependent editing activities. One activity is designated as 'pretransfer' editing and involves the hydrolysis of activated Val-AMP. The other activity is designated 'posttransfer' editing and involves deacylation of mischarged Val-tRNA(Ile). In Listeria monocytogenes serovar 1/2a (strain ATCC BAA-679 / EGD-e), this protein is Isoleucine--tRNA ligase.